The chain runs to 95 residues: Integration host factor subunit beta (95 aa).

It belongs to the bacterial histone-like protein family. In terms of assembly, heterodimer of an alpha and a beta chain.

Its function is as follows. This protein is one of the two subunits of integration host factor, a specific DNA-binding protein that functions in genetic recombination as well as in transcriptional and translational control. This Jannaschia sp. (strain CCS1) protein is Integration host factor subunit beta.